We begin with the raw amino-acid sequence, 369 residues long: Anhydro-N-acetylmuramic acid kinase (369 aa).

Gly12–Asp19 serves as a coordination point for ATP.

It belongs to the anhydro-N-acetylmuramic acid kinase family.

It carries out the reaction 1,6-anhydro-N-acetyl-beta-muramate + ATP + H2O = N-acetyl-D-muramate 6-phosphate + ADP + H(+). It participates in amino-sugar metabolism; 1,6-anhydro-N-acetylmuramate degradation. The protein operates within cell wall biogenesis; peptidoglycan recycling. Catalyzes the specific phosphorylation of 1,6-anhydro-N-acetylmuramic acid (anhMurNAc) with the simultaneous cleavage of the 1,6-anhydro ring, generating MurNAc-6-P. Is required for the utilization of anhMurNAc either imported from the medium or derived from its own cell wall murein, and thus plays a role in cell wall recycling. In Escherichia coli O1:K1 / APEC, this protein is Anhydro-N-acetylmuramic acid kinase.